The sequence spans 379 residues: (R)-2-hydroxyglutaryl-CoA dehydratase, subunit beta (379 aa).

This sequence belongs to the FldB/FldC dehydratase alpha/beta subunit family. In terms of assembly, the (R)-2-hydroxyglutaryl-CoA dehydratase enzyme system is a heterodimer composed of an alpha subunit (HgdA) and a beta subunit (HgdB). [4Fe-4S] cluster is required as a cofactor. FMN serves as cofactor. The cofactor is Mg(2+).

It localises to the cytoplasm. The enzyme catalyses (R)-2-hydroxyglutaryl-CoA = (2E)-glutaconyl-CoA + H2O. Its pathway is amino-acid degradation; L-glutamate degradation via hydroxyglutarate pathway; crotonoyl-CoA from L-glutamate: step 4/5. With respect to regulation, activated by the HgdC. Reversibly inactivated by oxidants such as 2-nitrophenol, 3-nitrophenol, 4-nitrophenol, 4-nitrobenzoate, carbonyl cyanide 4-(trifluoromethoxy)phenylhydrazone (FCCP) and chloramphenicol. Irreversibly inactivated by oxidants such as hydroxylamine and nitrite. Functionally, involved in the fermentation of L-glutamate via the hydroxyglutarate pathway. Catalyzes the reversible syn-elimination of water from (R)-2-hydroxyglutaryl-CoA to yield (E)-glutaconyl-CoA. The dehydration mechanism involves a transient one electron reduction of the thioester from (R)-2-hydroxyglutaryl-CoA, generating a ketyl radical. Prior to (E)-glutaconyl-CoA formation, the ketyl radical is subsequently reoxidized by electron transfer back to the HgdA-HgdB complex (CompD) to avoid change in oxidation state of the substrate. The appropriate redox state of dehydratase HgdA-HgdB complex (CompD) is maintained by HgdC (CompA) via hydrolysis of ATP and ATP-dependent electron transfer. Since the electron is recycled, the dehydratase is able to perform several turnovers with only catalytic amounts of ATP and substoichiometric amounts of HgdC (CompA). The sequence is that of (R)-2-hydroxyglutaryl-CoA dehydratase, subunit beta from Acidaminococcus fermentans (strain ATCC 25085 / DSM 20731 / CCUG 9996 / CIP 106432 / VR4).